The following is a 375-amino-acid chain: UDP-N-acetylglucosamine--N-acetylmuramyl-(pentapeptide) pyrophosphoryl-undecaprenol N-acetylglucosamine transferase (375 aa).

UDP-N-acetyl-alpha-D-glucosamine contacts are provided by residues Thr13–Gly15, Asn124, Arg165, Ser193, and Gln294.

This sequence belongs to the glycosyltransferase 28 family. MurG subfamily.

The protein resides in the cell inner membrane. It catalyses the reaction di-trans,octa-cis-undecaprenyl diphospho-N-acetyl-alpha-D-muramoyl-L-alanyl-D-glutamyl-meso-2,6-diaminopimeloyl-D-alanyl-D-alanine + UDP-N-acetyl-alpha-D-glucosamine = di-trans,octa-cis-undecaprenyl diphospho-[N-acetyl-alpha-D-glucosaminyl-(1-&gt;4)]-N-acetyl-alpha-D-muramoyl-L-alanyl-D-glutamyl-meso-2,6-diaminopimeloyl-D-alanyl-D-alanine + UDP + H(+). It functions in the pathway cell wall biogenesis; peptidoglycan biosynthesis. Functionally, cell wall formation. Catalyzes the transfer of a GlcNAc subunit on undecaprenyl-pyrophosphoryl-MurNAc-pentapeptide (lipid intermediate I) to form undecaprenyl-pyrophosphoryl-MurNAc-(pentapeptide)GlcNAc (lipid intermediate II). This chain is UDP-N-acetylglucosamine--N-acetylmuramyl-(pentapeptide) pyrophosphoryl-undecaprenol N-acetylglucosamine transferase, found in Chelativorans sp. (strain BNC1).